A 386-amino-acid polypeptide reads, in one-letter code: Acetylornithine aminotransferase (386 aa).

Pyridoxal 5'-phosphate contacts are provided by residues 94-95 (GT) and phenylalanine 121. N(2)-acetyl-L-ornithine is bound at residue arginine 124. 206-209 (DEVQ) is a binding site for pyridoxal 5'-phosphate. Lysine 235 bears the N6-(pyridoxal phosphate)lysine mark. Residue serine 263 coordinates N(2)-acetyl-L-ornithine. Residue threonine 264 participates in pyridoxal 5'-phosphate binding.

Belongs to the class-III pyridoxal-phosphate-dependent aminotransferase family. ArgD subfamily. As to quaternary structure, homodimer. Pyridoxal 5'-phosphate is required as a cofactor.

The protein localises to the cytoplasm. It catalyses the reaction N(2)-acetyl-L-ornithine + 2-oxoglutarate = N-acetyl-L-glutamate 5-semialdehyde + L-glutamate. It functions in the pathway amino-acid biosynthesis; L-arginine biosynthesis; N(2)-acetyl-L-ornithine from L-glutamate: step 4/4. The protein is Acetylornithine aminotransferase of Listeria monocytogenes serotype 4b (strain F2365).